The chain runs to 1041 residues: DNA polymerase catalytic subunit (1041 aa).

Residues 1 to 23 (MAFFNPYFKSKNKGSDMPPKQSM) form a disordered region.

This sequence belongs to the DNA polymerase type-B family.

It localises to the host nucleus. It carries out the reaction DNA(n) + a 2'-deoxyribonucleoside 5'-triphosphate = DNA(n+1) + diphosphate. The enzyme catalyses Endonucleolytic cleavage to 5'-phosphomonoester.. Its function is as follows. Replicates viral genomic DNA. The replication complex is composed of six viral proteins: the DNA polymerase, processivity factor, primase, primase-associated factor, helicase, and ssDNA-binding protein. Additionally, the polymerase contains an intrinsic ribonuclease H (RNase H) activity that specifically degrades RNA/DNA heteroduplexes or duplex DNA substrates in the 5' to 3' direction. Therefore, it can catalyze the excision of the RNA primers that initiate the synthesis of Okazaki fragments at a replication fork during viral DNA replication. This Elephantid herpesvirus 1 (isolate Asian elephant/Berlin/Kiba/1998) (EIHV-1) protein is DNA polymerase catalytic subunit.